We begin with the raw amino-acid sequence, 587 residues long: Synaptotagmin-3 (587 aa).

Topologically, residues 1–54 (MSGDYEDDLCRRALILVSDLCARVRDADTNDRCQEFNELRIRGYPRGPDADISV) are vesicular. The segment at 10 to 34 (CRRALILVSDLCARVRDADTNDRCQ) is cysteine motif. Residues 55–75 (SLLSVIVTFCGIVLLGVSLFV) form a helical membrane-spanning segment. At 76–587 (SWKLCWVPWR…KGLSEKENSE (512 aa)) the chain is on the cytoplasmic side. The span at 183–205 (PSQTSPELPSEGGTGSGLLLLPP) shows a compositional bias: low complexity. Residues 183–258 (PSQTSPELPS…EERPPALPLP (76 aa)) are disordered. Positions 213-224 (AQSHQQVTSLAP) are enriched in polar residues. Low complexity predominate over residues 229 to 244 (PALPRPLTQQTLTTQA). Arg-286 is modified (omega-N-methylarginine). 2 C2 domains span residues 296-417 (PCGR…PLWR) and 428-562 (DLGE…EHWH). 11 residues coordinate Ca(2+): Asp-327, Asp-333, Asp-385, Phe-386, Asp-387, Ser-390, Asp-393, Asp-459, Asp-465, Asp-519, and Asp-521.

It belongs to the synaptotagmin family. In terms of assembly, homodimer; disulfide-linked via the cysteine motif. Can also form heterodimers with SYT6, SYT9 and SYT10. It depends on Ca(2+) as a cofactor.

It is found in the cell membrane. The protein localises to the cytoplasmic vesicle. It localises to the secretory vesicle membrane. Ca(2+) sensor involved in Ca(2+)-dependent exocytosis of secretory vesicles through Ca(2+) and phospholipid binding to the C2 domain. Ca(2+) induces binding of the C2-domains to phospholipid membranes and to assembled SNARE-complexes; both actions contribute to triggering exocytosis. Plays a role in dendrite formation by melanocytes. This chain is Synaptotagmin-3 (Syt3), found in Mus musculus (Mouse).